We begin with the raw amino-acid sequence, 76 residues long: Sec-independent protein translocase protein TatA (76 aa).

A helical transmembrane segment spans residues 1–21 (MGSFSIWHWLIVLAVVLLLFG). The disordered stretch occupies residues 43 to 76 (MSDEDAKDDARDSGRTIDAKADETVNDVKKTTKS). Basic and acidic residues predominate over residues 50 to 76 (DDARDSGRTIDAKADETVNDVKKTTKS).

This sequence belongs to the TatA/E family. In terms of assembly, the Tat system comprises two distinct complexes: a TatABC complex, containing multiple copies of TatA, TatB and TatC subunits, and a separate TatA complex, containing only TatA subunits. Substrates initially bind to the TatABC complex, which probably triggers association of the separate TatA complex to form the active translocon.

It is found in the cell inner membrane. Functionally, part of the twin-arginine translocation (Tat) system that transports large folded proteins containing a characteristic twin-arginine motif in their signal peptide across membranes. TatA could form the protein-conducting channel of the Tat system. This Brucella anthropi (strain ATCC 49188 / DSM 6882 / CCUG 24695 / JCM 21032 / LMG 3331 / NBRC 15819 / NCTC 12168 / Alc 37) (Ochrobactrum anthropi) protein is Sec-independent protein translocase protein TatA.